Reading from the N-terminus, the 475-residue chain is Gustatory and pheromone receptor 33a (475 aa).

The Cytoplasmic portion of the chain corresponds to 1–34; it reads MIQIMNWFSMVIGLIPLNRQQSETNFILDYAMMC. Residues 35-55 form a helical membrane-spanning segment; the sequence is IVPIFYVACYLLINLSHIIGL. Residues 56–68 are Extracellular-facing; sequence CLLDSCNSVCKLS. Residues 69–89 traverse the membrane as a helical segment; the sequence is SHLFMHLGAFLYLTITLLSLY. The Cytoplasmic segment spans residues 90–128; that stretch reads RRKEFFQQFDARLNDIDAVIQKCQRVAEMDKVKVTAVKH. A helical membrane pass occupies residues 129-149; it reads SVAYHFTWLFLFCVFTFALYY. At 150-158 the chain is on the extracellular side; sequence DVRSLYLTF. The chain crosses the membrane as a helical span at residues 159–179; it reads GNLAFIPFMVSSFPYLAGSII. The Cytoplasmic portion of the chain corresponds to 180–319; it reads QGEFIYHVSV…LALSVITNGE (140 aa). The disordered stretch occupies residues 243–281; sequence TGFGNENKFAGEMKRQEGQQKNDDDDLDTSNDEDEDDFD. Positions 251–264 are enriched in basic and acidic residues; the sequence is FAGEMKRQEGQQKN. Residues 265–281 are compositionally biased toward acidic residues; it reads DDDDLDTSNDEDEDDFD. A helical transmembrane segment spans residues 320–340; sequence FGPQCVPYMAACFVVSIFGIF. At 341–357 the chain is on the extracellular side; it reads LETKVNFIVGGKSRLLD. Residues 358 to 378 form a helical membrane-spanning segment; that stretch reads YMTYLYVIWSFTTMMVAYIVL. Residues 379-441 are Cytoplasmic-facing; it reads RLCCNANNHS…FNGVGLFALD (63 aa). The helical transmembrane segment at 442 to 462 threads the bilayer; that stretch reads YTFIFSTVSAATSYLIVLLQF. Residues 463–475 lie on the Extracellular side of the membrane; it reads DMTAILRNEGLMS.

It belongs to the insect chemoreceptor superfamily. Gustatory receptor (GR) family. Gr66a subfamily. As to expression, expressed widely in gustatory receptor neurons (GRNs) that respond to aversive chemicals. In larvae, is expressed in neurons of the terminal external chemosensory organ, and the dorsal, ventral and posterior external chemosensory organs.

The protein localises to the cell membrane. Its function is as follows. Gustatory receptor which mediates acceptance or avoidance behavior, depending on its substrates. Required for sensing all nonvolatile repulsive chemicals, including tastants, pheromones, and especially N,N-Diethyl-meta-toluamide (DEET), the most widely used insect repellent worldwide. Also functions as a pheromone receptor for a male inhibitory pheromone leading to male-male courtship suppression. This Drosophila melanogaster (Fruit fly) protein is Gustatory and pheromone receptor 33a (Gr33a).